Here is a 202-residue protein sequence, read N- to C-terminus: Holliday junction branch migration complex subunit RuvA (202 aa).

The domain I stretch occupies residues 1–64 (MIGRLRGTLA…EDAQLLYGFA (64 aa)). Residues 65 to 143 (GKRERDFFRE…AWETSPAMFA (79 aa)) are domain II. Residues 144-154 (LVPNQPDGPAP) form a flexible linker region. Residues 154-202 (PVNTAENDAVSALISLGYKPQEASKAISAIKEKGLSSEDMIRRALKGMI) form a domain III region.

Belongs to the RuvA family. As to quaternary structure, homotetramer. Forms an RuvA(8)-RuvB(12)-Holliday junction (HJ) complex. HJ DNA is sandwiched between 2 RuvA tetramers; dsDNA enters through RuvA and exits via RuvB. An RuvB hexamer assembles on each DNA strand where it exits the tetramer. Each RuvB hexamer is contacted by two RuvA subunits (via domain III) on 2 adjacent RuvB subunits; this complex drives branch migration. In the full resolvosome a probable DNA-RuvA(4)-RuvB(12)-RuvC(2) complex forms which resolves the HJ.

The protein resides in the cytoplasm. The RuvA-RuvB-RuvC complex processes Holliday junction (HJ) DNA during genetic recombination and DNA repair, while the RuvA-RuvB complex plays an important role in the rescue of blocked DNA replication forks via replication fork reversal (RFR). RuvA specifically binds to HJ cruciform DNA, conferring on it an open structure. The RuvB hexamer acts as an ATP-dependent pump, pulling dsDNA into and through the RuvAB complex. HJ branch migration allows RuvC to scan DNA until it finds its consensus sequence, where it cleaves and resolves the cruciform DNA. This is Holliday junction branch migration complex subunit RuvA from Pseudomonas fluorescens (strain Pf0-1).